A 547-amino-acid polypeptide reads, in one-letter code: Inositol-tetrakisphosphate 1-kinase 6 (547 aa).

K263 serves as a coordination point for 1D-myo-inositol 1,3,4-trisphosphate. ATP is bound by residues R317 and K370. The ATP-grasp domain occupies 327-539; that stretch reads LEGLSAEGRP…FWDAIKQSYE (213 aa). Positions 381 and 415 each coordinate 1D-myo-inositol 1,3,4-trisphosphate. ATP is bound by residues 404-415, S430, and S450; that span reads QEYIDHGSKIFK. Residues D497, D511, and N513 each coordinate Mg(2+). 1D-myo-inositol 1,3,4-trisphosphate contacts are provided by N513 and S517.

Belongs to the ITPK1 family. As to quaternary structure, monomer. Mg(2+) is required as a cofactor. In terms of tissue distribution, highly expressed in embryos and at lower levels in roots, leaves, flowers and anthers.

It carries out the reaction 1D-myo-inositol 3,4,5,6-tetrakisphosphate + ATP = 1D-myo-inositol 1,3,4,5,6-pentakisphosphate + ADP + H(+). The enzyme catalyses 1D-myo-inositol 1,3,4-trisphosphate + ATP = 1D-myo-inositol 1,3,4,5-tetrakisphosphate + ADP + H(+). The catalysed reaction is 1D-myo-inositol 1,3,4-trisphosphate + ATP = 1D-myo-inositol 1,3,4,6-tetrakisphosphate + ADP + H(+). Functionally, kinase that can phosphorylate various inositol polyphosphate such as Ins(3,4,5,6)P4 or Ins(1,3,4)P3 and participates in phytic acid biosynthesis in developing seeds. Phytic acid is the primary storage form of phosphorus in cereal grains and other plant seeds. The polypeptide is Inositol-tetrakisphosphate 1-kinase 6 (ITPK6) (Oryza sativa subsp. japonica (Rice)).